A 324-amino-acid polypeptide reads, in one-letter code: Methionyl-tRNA formyltransferase (324 aa).

Position 114–117 (114–117 (SLLP)) interacts with (6S)-5,6,7,8-tetrahydrofolate.

This sequence belongs to the Fmt family.

The enzyme catalyses L-methionyl-tRNA(fMet) + (6R)-10-formyltetrahydrofolate = N-formyl-L-methionyl-tRNA(fMet) + (6S)-5,6,7,8-tetrahydrofolate + H(+). Functionally, attaches a formyl group to the free amino group of methionyl-tRNA(fMet). The formyl group appears to play a dual role in the initiator identity of N-formylmethionyl-tRNA by promoting its recognition by IF2 and preventing the misappropriation of this tRNA by the elongation apparatus. This chain is Methionyl-tRNA formyltransferase, found in Parabacteroides distasonis (strain ATCC 8503 / DSM 20701 / CIP 104284 / JCM 5825 / NCTC 11152).